We begin with the raw amino-acid sequence, 292 residues long: RWD domain-containing protein 2A (292 aa).

Residues 14–134 enclose the RWD domain; that stretch reads LEMEMLFSMF…QWLQDNSASY (121 aa).

This is RWD domain-containing protein 2A (RWDD2A) from Homo sapiens (Human).